The chain runs to 511 residues: GMP synthase [glutamine-hydrolyzing] (511 aa).

A Glutamine amidotransferase type-1 domain is found at 5–195; sequence AILVLDFGSQ…VFKICQAQIN (191 aa). Cys82 (nucleophile) is an active-site residue. Residues His169 and Glu171 contribute to the active site. One can recognise a GMPS ATP-PPase domain in the interval 196–386; it reads WSLEGNLETI…LGIKKESLYR (191 aa). Position 223 to 229 (223 to 229) interacts with ATP; it reads SGGTDSL.

As to quaternary structure, homodimer.

It carries out the reaction XMP + L-glutamine + ATP + H2O = GMP + L-glutamate + AMP + diphosphate + 2 H(+). It participates in purine metabolism; GMP biosynthesis; GMP from XMP (L-Gln route): step 1/1. Functionally, catalyzes the synthesis of GMP from XMP. The chain is GMP synthase [glutamine-hydrolyzing] (guaA) from Borreliella burgdorferi (strain N40) (Borrelia burgdorferi).